The following is a 68-amino-acid chain: Alpha-conotoxin Lp1.4 (68 aa).

The signal sequence occupies residues 1–21; the sequence is MGMRMMSIMFMLVVLATTVVS. Residues 22–48 constitute a propeptide that is removed on maturation; it reads FTSDRALDAMNAAASKKASRLIALAVR. 2 disulfide bridges follow: C50–C56 and C51–C64. The segment at 52 to 54 is ser-Xaa-Pro motif, crucial for potent interaction with nAChR; that stretch reads SHP. At D65 the chain carries Aspartic acid 1-amide.

It belongs to the conotoxin A superfamily. In terms of tissue distribution, expressed by the venom duct.

The protein localises to the secreted. In terms of biological role, alpha-conotoxins act on postsynaptic membranes, they bind to the nicotinic acetylcholine receptors (nAChR) and thus inhibit them. This toxin inhibits mouse muscle alpha-1-beta-1-gamma-delta (CHRNA1-CHRNB1-CHRNG-CHRND), and weakly rat neuronal alpha-6/alpha-3-beta-2 (CHRNA6/CHRNA3-CHRNB2). The protein is Alpha-conotoxin Lp1.4 of Conus leopardus (Leopard cone).